Reading from the N-terminus, the 128-residue chain is Neuromedin-S (128 aa).

The first 27 residues, M1–G27, serve as a signal peptide directing secretion. Propeptides lie at residues F28–Y72 and F75–T100. N119 is subject to Asparagine amide. Positions V123–H128 are excised as a propeptide.

Belongs to the NmU family. As to expression, expressed by the skin glands.

It localises to the secreted. Neuromedin-S-17: stimulates uterine smooth muscle contraction (B similarity). Synthetic peptide NmS-17 induces calcium mobilization in CHO cells transfected with either human FM-3/GPR66 (EC(50)=0.085 nM) or FM-4/TGR-1 (EC(50)=0.231 nM) NmU/NmS receptors. The polypeptide is Neuromedin-S (nms) (Bombina variegata (Yellow-bellied toad)).